A 370-amino-acid chain; its full sequence is Phosphate-binding protein PstS 2 (370 aa).

The signal sequence occupies residues 1–22 (MKFARSGAAVSLLAAGTLVLTA). Cys-23 carries the N-palmitoyl cysteine lipid modification. The S-diacylglycerol cysteine moiety is linked to residue Cys-23. Phosphate-binding positions include 54 to 56 (STA), Ser-84, Asp-102, and 191 to 193 (SGT).

This sequence belongs to the PstS family. As to quaternary structure, the complex is composed of two ATP-binding proteins (PstB), two transmembrane proteins (PstC and PstA) and a solute-binding protein (PstS).

It is found in the cell membrane. In terms of biological role, functions in inorganic phosphate uptake, although probably not the main uptake protein under phosphate starvation. Part of the ABC transporter complex PstSACB involved in phosphate import. The protein is Phosphate-binding protein PstS 2 (pstS2) of Mycobacterium tuberculosis (strain ATCC 25618 / H37Rv).